The primary structure comprises 119 residues: Protein TusC (119 aa).

This sequence belongs to the DsrF/TusC family. Heterohexamer, formed by a dimer of trimers. The hexameric TusBCD complex contains 2 copies each of TusB, TusC and TusD. The TusBCD complex interacts with TusE.

It localises to the cytoplasm. Functionally, part of a sulfur-relay system required for 2-thiolation of 5-methylaminomethyl-2-thiouridine (mnm(5)s(2)U) at tRNA wobble positions. This chain is Protein TusC, found in Shigella boydii serotype 18 (strain CDC 3083-94 / BS512).